Here is a 413-residue protein sequence, read N- to C-terminus: Eukaryotic initiation factor 4A-7 (413 aa).

The Q motif motif lies at 40–68 (DSFDAMGLQENLLRGIYAYGFEKPSAIQQ). A Helicase ATP-binding domain is found at 71-241 (IVPFCKGLDV…RKFMNKPVRI (171 aa)). Residue 84-91 (AQSGTGKT) participates in ATP binding. The DEAD box signature appears at 189–192 (DEAD). Residues 252–413 (GIKQFYVNVD…ELPANVADLL (162 aa)) form the Helicase C-terminal domain.

This sequence belongs to the DEAD box helicase family. eIF4A subfamily. As to quaternary structure, eIF4F is a multi-subunit complex, the composition of which varies with external and internal environmental conditions. It is composed of at least EIF4A, EIF4E and EIF4G.

It catalyses the reaction ATP + H2O = ADP + phosphate + H(+). ATP-dependent RNA helicase which is a subunit of the eIF4F complex involved in cap recognition and is required for mRNA binding to ribosome. In the current model of translation initiation, eIF4A unwinds RNA secondary structures in the 5'-UTR of mRNAs which is necessary to allow efficient binding of the small ribosomal subunit, and subsequent scanning for the initiator codon. The protein is Eukaryotic initiation factor 4A-7 of Nicotiana tabacum (Common tobacco).